Here is a 462-residue protein sequence, read N- to C-terminus: MMITKKLYQCMCLLCMVIALLDVVSSDDAKEQKMKDKIISLPGQPPNLNFSQFSGYVTVDPAAGRALFYWLTEAPRPSGTKPLVLWLNGGPGCSSIAYGASEEVGPFRVNPDGKTLRLNLYAWNKVANVLFLDSPAGVGFSYTNTSSDELTVGDKRTGEDAYRFLVRWLERFPEYKERAFYIAGESYAGHYIPELAQLIVNRNKGAKNPTINLKGILMGNPLVDDYNDNKGMRDYWWNHGLISDESYNDLTKWCLNDSILFPKLNCNAALNQALSEFGDIDPYNINSPACTTHASSNEWMQAWRYRGNDECVVGYTRKYMNDPNVHKSFHARLNGSTPWTPCSRVIRKNWKDSPKSMLPIIKNLLQAHLRIWIFSGDSDAVLPLSGTRHSINAMKLKSSKRWYPWYHSHGLVGGWSQVYEDGLLTYTTVRAAGHEVPLSQPRLALFLFTHFLANHSLPSSPS.

The N-terminal stretch at 1 to 26 is a signal peptide; it reads MMITKKLYQCMCLLCMVIALLDVVSS. N-linked (GlcNAc...) asparagine glycosylation is found at Asn-49 and Asn-144. Cystine bridges form between Cys-93/Cys-342, Cys-254/Cys-266, and Cys-290/Cys-311. Residue Ser-186 is part of the active site. An N-linked (GlcNAc...) asparagine glycan is attached at Asn-256. Residue Asn-334 is glycosylated (N-linked (GlcNAc...) asparagine). Active-site residues include Asp-379 and His-434. Asn-454 carries N-linked (GlcNAc...) asparagine glycosylation.

It belongs to the peptidase S10 family. As to expression, expressed in seedlings, roots and senescent leaves.

The protein localises to the secreted. Functionally, probable carboxypeptidase. This is Serine carboxypeptidase-like 28 (SCPL28) from Arabidopsis thaliana (Mouse-ear cress).